Consider the following 224-residue polypeptide: UPF0758 protein PSPPH_0210 (224 aa).

Residues Ala102–Met224 form the MPN domain. Residues His173, His175, and Asp186 each coordinate Zn(2+). The JAMM motif motif lies at His173–Asp186.

It belongs to the UPF0758 family.

This is UPF0758 protein PSPPH_0210 from Pseudomonas savastanoi pv. phaseolicola (strain 1448A / Race 6) (Pseudomonas syringae pv. phaseolicola (strain 1448A / Race 6)).